The primary structure comprises 167 residues: Large ribosomal subunit protein uL5 (167 aa).

Belongs to the universal ribosomal protein uL5 family. As to quaternary structure, part of the 50S ribosomal subunit; contacts the 5S rRNA and probably tRNA. Forms a bridge to the 30S subunit in the 70S ribosome.

Its function is as follows. This is one of the proteins that bind and probably mediate the attachment of the 5S RNA into the large ribosomal subunit, where it forms part of the central protuberance. In the 70S ribosome it contacts protein S13 of the 30S subunit (bridge B1b), connecting the 2 subunits; this bridge is implicated in subunit movement. May contact the P site tRNA; the 5S rRNA and some of its associated proteins might help stabilize positioning of ribosome-bound tRNAs. This chain is Large ribosomal subunit protein uL5, found in Methanoculleus marisnigri (strain ATCC 35101 / DSM 1498 / JR1).